Reading from the N-terminus, the 132-residue chain is Large ribosomal subunit protein bL21 (132 aa).

Residues 104–132 (GKAPSIGPRPPREKKPVVETSAEADDAAA) are disordered.

It belongs to the bacterial ribosomal protein bL21 family. Part of the 50S ribosomal subunit. Contacts protein L20.

Its function is as follows. This protein binds to 23S rRNA in the presence of protein L20. This Rhodopseudomonas palustris (strain BisB18) protein is Large ribosomal subunit protein bL21.